We begin with the raw amino-acid sequence, 96 residues long: ATP synthase subunit c (96 aa).

The next 2 membrane-spanning stretches (helical) occupy residues 9-29 and 58-78; these read FIAC…GCGI and IGLA…LILI.

Belongs to the ATPase C chain family. As to quaternary structure, F-type ATPases have 2 components, F(1) - the catalytic core - and F(0) - the membrane proton channel. F(1) has five subunits: alpha(3), beta(3), gamma(1), delta(1), epsilon(1). F(0) has three main subunits: a(1), b(2) and c(10-14). The alpha and beta chains form an alternating ring which encloses part of the gamma chain. F(1) is attached to F(0) by a central stalk formed by the gamma and epsilon chains, while a peripheral stalk is formed by the delta and b chains.

Its subcellular location is the cell inner membrane. In terms of biological role, f(1)F(0) ATP synthase produces ATP from ADP in the presence of a proton or sodium gradient. F-type ATPases consist of two structural domains, F(1) containing the extramembraneous catalytic core and F(0) containing the membrane proton channel, linked together by a central stalk and a peripheral stalk. During catalysis, ATP synthesis in the catalytic domain of F(1) is coupled via a rotary mechanism of the central stalk subunits to proton translocation. Its function is as follows. Key component of the F(0) channel; it plays a direct role in translocation across the membrane. A homomeric c-ring of between 10-14 subunits forms the central stalk rotor element with the F(1) delta and epsilon subunits. The chain is ATP synthase subunit c from Desulfosudis oleivorans (strain DSM 6200 / JCM 39069 / Hxd3) (Desulfococcus oleovorans).